The primary structure comprises 60 residues: MAKGKENRIIITIECTEAKKEGKPVSRYSTTKNKKNTTERLLLKKYNPNLQRHTVHKEIK.

Belongs to the bacterial ribosomal protein bL33 family.

In Chlorobium limicola (strain DSM 245 / NBRC 103803 / 6330), this protein is Large ribosomal subunit protein bL33.